Reading from the N-terminus, the 173-residue chain is Large ribosomal subunit protein uL10 (173 aa).

Belongs to the universal ribosomal protein uL10 family. Part of the ribosomal stalk of the 50S ribosomal subunit. The N-terminus interacts with L11 and the large rRNA to form the base of the stalk. The C-terminus forms an elongated spine to which L12 dimers bind in a sequential fashion forming a multimeric L10(L12)X complex.

In terms of biological role, forms part of the ribosomal stalk, playing a central role in the interaction of the ribosome with GTP-bound translation factors. This chain is Large ribosomal subunit protein uL10, found in Bifidobacterium adolescentis (strain ATCC 15703 / DSM 20083 / NCTC 11814 / E194a).